The sequence spans 804 residues: Mechanosensitive cation channel TMEM63A (804 aa).

The Extracellular segment spans residues 1-51; that stretch reads MTSSPFLDPWPSKAVFVRERLGLGERPNDSYCYNSAKNSTVLQGVTFGGIP. A glycan (N-linked (GlcNAc...) asparagine) is linked at N38. A helical transmembrane segment spans residues 52-74; it reads TVLLLDVSCFLFLILVFSIIRRR. Residues 75–133 lie on the Cytoplasmic side of the membrane; it reads FWDYGRIALVSEAGSEARFQRLSSSSSGQQDFENELGCCPWLTAIFRLHDDQILEWCGE. The chain crosses the membrane as a helical span at residues 134–166; it reads DAIHYLSFQRHIIFLLVVISFLSLCVILPVNLS. Residues 167 to 190 are Extracellular-facing; that stretch reads GDLLGKDPYSFGRTTIANLQTDND. The chain crosses the membrane as a helical span at residues 191–216; that stretch reads LLWLHTVFSVIYLFLTVGFMWHHTRS. At 217–415 the chain is on the cytoplasmic side; that stretch reads IRYKEESLVR…CWKNLSIQGV (199 aa). Residues 218-413 are intracellular linker IL2; confers mechanosensitivity; sequence RYKEESLVRQ…DICWKNLSIQ (196 aa). Residues 416-443 traverse the membrane as a helical segment; it reads RWWLQWLGINFSLFVVLFFLTTPSIIMS. Residues 444–461 are Extracellular-facing; it reads TMDKFNVTKPIHALNNPV. N-linked (GlcNAc...) asparagine glycosylation is present at N449. The helical transmembrane segment at 462 to 489 threads the bilayer; that stretch reads ISQFFPTLLLWSFSALLPSIVYYSTLLE. At 490-494 the chain is on the cytoplasmic side; it reads SHWTR. A helical transmembrane segment spans residues 495 to 531; sequence SGENRIMVSKVYIFLIFMVLILPSLGLTSLDFFFRWL. Residues 532–553 lie on the Extracellular side of the membrane; the sequence is FDKTSSETSIRLECVFLPDQGA. A helical transmembrane segment spans residues 554–585; the sequence is FFVNYVIASAFIGSGMELLRLPGLILYTFRMI. Residues 554–585 are gating helix; the sequence is FFVNYVIASAFIGSGMELLRLPGLILYTFRMI. The Cytoplasmic segment spans residues 586 to 605; it reads MAKTAADRRNVKQNQAFEYE. A helical transmembrane segment spans residues 606-623; that stretch reads FGAMYAWMLCVFTVIMAY. At 624–627 the chain is on the extracellular side; that stretch reads SITC. The helical transmembrane segment at 628-650 threads the bilayer; the sequence is PIIVPFGLIYILLKHMVDRHNLY. Topologically, residues 651–660 are cytoplasmic; sequence FAYLPAKLEK. The chain crosses the membrane as a helical span at residues 661-688; it reads RIHFAAVNQALAAPILCLFWLFFFSFLR. The Extracellular portion of the chain corresponds to 689–693; that stretch reads LGLTA. The helical transmembrane segment at 694-708 threads the bilayer; it reads PATLFTFLVVLLTIL. The Cytoplasmic portion of the chain corresponds to 709-804; the sequence is ACLLYTCFGC…GTAAYAYQES (96 aa). S738 carries the post-translational modification Phosphoserine.

The protein belongs to the CSC1 (TC 1.A.17) family. Monomer. In terms of processing, N-Glycosylated.

It is found in the lysosome membrane. It localises to the early endosome membrane. Its subcellular location is the cell membrane. The enzyme catalyses Ca(2+)(in) = Ca(2+)(out). Its function is as follows. Mechanosensitive cation channel with low conductance and high activation threshold. In contrast to TMEM63B, does not show phospholipid scramblase activity. Acts as a regulator of lysosomal morphology by mediating lysosomal mechanosensitivity. Important for the baby's first breath and respiration throughout life. Upon lung inflation conducts cation currents in alveolar type 1 and 2 cells triggering lamellar body exocytosis and surfactant secretion into airspace. Also acts as an osmosensitive cation channel preferentially activated by hypotonic stress. The polypeptide is Mechanosensitive cation channel TMEM63A (Mus musculus (Mouse)).